The sequence spans 308 residues: Secreted frizzled-related protein 1 (308 aa).

A signal peptide spans 1-25 (MGGGRWAAAGALLALAAGLLAAGSA). One can recognise an FZ domain in the interval 47 to 163 (TKPPQCVDIP…FPEGDVCIAM (117 aa)). 5 disulfides stabilise this stretch: C52–C115, C62–C108, C99–C134, C123–C160, and C127–C151. An N-linked (GlcNAc...) asparagine glycan is attached at N167. 3 disulfides stabilise this stretch: C180/C250, C183/C252, and C197/C300. In terms of domain architecture, NTR spans 180 to 300 (CPPCDNELKS…FMKKMKNHEC (121 aa)).

The protein belongs to the secreted frizzled-related protein (sFRP) family. Interacts with WNT1, WNT2, WNT4, WNT8, MYOC and FRZD6. As to expression, highest levels in aortic endothelium, heart, spleen and eye. Lower levels in lung, brain and kidney. Weak expression in liver, skeletal muscle and the medial layer of the aorta. In the cortical brain, localized to neurons and small blood vessels. In the retina, localized to the inner and outer nuclear layers with high expression in the neuronal cell bodies. In the heart, restricted to myocytes. In lung, highest expression found in the epithelium of terminal bronchioles. In kidney, localized to the epithelium of collecting ducts of the medulla and, in spleen, expression restricted to the red pulp in cells associated with the sinuses.

The protein resides in the secreted. Its function is as follows. Soluble frizzled-related proteins (sFRPS) function as modulators of Wnt signaling through direct interaction with Wnts. They have a role in regulating cell growth and differentiation in specific cell types. SFRP1 decreases intracellular beta-catenin levels. Has antiproliferative effects on vascular cells, in vitro and in vivo, and can induce, in vivo, an angiogenic response. In vascular cell cycle, delays the G1 phase and entry into the S phase. In kidney development, inhibits tubule formation and bud growth in metanephroi. Inhibits WNT1/WNT4-mediated TCF-dependent transcription. The polypeptide is Secreted frizzled-related protein 1 (SFRP1) (Bos taurus (Bovine)).